The following is a 76-amino-acid chain: MDLETRVSGHEKPKEEIRRIPDCQYAKTRSSPCEPLWGLEEAASRTSAGSWAHQDGLGDSSLFEIHGNQAITGSHQ.

Its function is as follows. Plays a role in viral replication. In Homo sapiens (Human), this protein is uORF2 protein.